The following is a 145-amino-acid chain: Fluoride-specific ion channel FluC 2 (145 aa).

4 helical membrane-spanning segments follow: residues 16–36, 42–62, 80–100, and 113–133; these read MLLV…LSAA, VISV…GWLL, LFAG…AVDT, and ILYA…GIAL. Na(+) is bound by residues glycine 88 and threonine 91.

Belongs to the fluoride channel Fluc/FEX (TC 1.A.43) family.

The protein resides in the cell membrane. The enzyme catalyses fluoride(in) = fluoride(out). Its activity is regulated as follows. Na(+) is not transported, but it plays an essential structural role and its presence is essential for fluoride channel function. Functionally, fluoride-specific ion channel. Important for reducing fluoride concentration in the cell, thus reducing its toxicity. This Leifsonia xyli subsp. xyli (strain CTCB07) protein is Fluoride-specific ion channel FluC 2.